A 418-amino-acid polypeptide reads, in one-letter code: MTSTLPKASQPDPSSLQPSARPGAHGRFGRFGGQYVPETLMPALAELEQSAAQAWADPAFTGRLNHLLKTYVGRATPLYEAERLTAHYRRDDGGPRIWLKREDLNHTGAHKINNALGQALLALRMGKKRIIAETGAGQHGVATATVCARFGLDCVIYMGAEDMRRQALNVFRMRLLGATVAPVTAGSATLKDATSEAIRDWVTNVETTHYILGSVAGPHPYPMLVRDFHAVIGQEAKQQCEEAFGRLPDVLMACVGGGSNAMGLFHPFVQDTSVRLIGVEAAGDGVNTPRHAATITEGRAGVLHGAMSLLLQDSDGQVQEAHSISAGLDYPGVGPEHSYLKEIGRAEYAAVTDEQALDGLRLVSELEGIIPALETAHAFAWLEQLCPTLPQGCEVVINCSGRGDKDVNTVAEKLGDKL.

Over residues 1–18 (MTSTLPKASQPDPSSLQP) the composition is skewed to polar residues. The segment at 1–28 (MTSTLPKASQPDPSSLQPSARPGAHGRF) is disordered. An N6-(pyridoxal phosphate)lysine modification is found at Lys111.

Belongs to the TrpB family. In terms of assembly, tetramer of two alpha and two beta chains. Requires pyridoxal 5'-phosphate as cofactor.

The enzyme catalyses (1S,2R)-1-C-(indol-3-yl)glycerol 3-phosphate + L-serine = D-glyceraldehyde 3-phosphate + L-tryptophan + H2O. Its pathway is amino-acid biosynthesis; L-tryptophan biosynthesis; L-tryptophan from chorismate: step 5/5. Functionally, the beta subunit is responsible for the synthesis of L-tryptophan from indole and L-serine. This is Tryptophan synthase beta chain from Synechococcus sp. (strain CC9902).